We begin with the raw amino-acid sequence, 363 residues long: Flagellar P-ring protein (363 aa).

The N-terminal stretch at 1–20 (MKIKVLLAVALLAMTVPVKA) is a signal peptide.

This sequence belongs to the FlgI family. In terms of assembly, the basal body constitutes a major portion of the flagellar organelle and consists of four rings (L,P,S, and M) mounted on a central rod.

Its subcellular location is the periplasm. It localises to the bacterial flagellum basal body. Assembles around the rod to form the L-ring and probably protects the motor/basal body from shearing forces during rotation. This Shewanella amazonensis (strain ATCC BAA-1098 / SB2B) protein is Flagellar P-ring protein.